The following is a 481-amino-acid chain: Two-component response regulator ORR32 (481 aa).

Residues histidine 13–tryptophan 138 form the Response regulatory domain. The residue at position 66 (aspartate 66) is a 4-aspartylphosphate.

This sequence belongs to the ARR family. Type-B subfamily. Post-translationally, two-component system major event consists of a His-to-Asp phosphorelay between a sensor histidine kinase (HK) and a response regulator (RR). In plants, the His-to-Asp phosphorelay involves an additional intermediate named Histidine-containing phosphotransfer protein (HPt). This multistep phosphorelay consists of a His-Asp-His-Asp sequential transfer of a phosphate group between first a His and an Asp of the HK protein, followed by the transfer to a conserved His of the HPt protein and finally the transfer to an Asp in the receiver domain of the RR protein.

Functions as a response regulator involved in His-to-Asp phosphorelay signal transduction system. Phosphorylation of the Asp residue in the receiver domain activates the ability of the protein to promote the transcription of target genes. May directly activate some type-A response regulators in response to cytokinins. This is Two-component response regulator ORR32 from Oryza sativa subsp. japonica (Rice).